The following is a 226-amino-acid chain: Ribosomal RNA small subunit methyltransferase G (226 aa).

S-adenosyl-L-methionine-binding positions include glycine 95, leucine 100, 146–147 (VE), and arginine 159.

Belongs to the methyltransferase superfamily. RNA methyltransferase RsmG family.

The protein resides in the cytoplasm. The enzyme catalyses guanosine(527) in 16S rRNA + S-adenosyl-L-methionine = N(7)-methylguanosine(527) in 16S rRNA + S-adenosyl-L-homocysteine. Its function is as follows. Specifically methylates the N7 position of guanine in position 527 of 16S rRNA. The polypeptide is Ribosomal RNA small subunit methyltransferase G (Acidovorax sp. (strain JS42)).